Reading from the N-terminus, the 479-residue chain is Beta-monoglucosyldiacylglycerol synthase (479 aa).

The next 4 membrane-spanning stretches (helical) occupy residues 48 to 68 (AAVM…WVWG), 363 to 383 (FLLM…MALW), 389 to 409 (LLTP…YYGL), and 428 to 448 (LART…MPAV).

The protein belongs to the glycosyltransferase 2 family. Requires Mg(2+) as cofactor.

The protein resides in the membrane. The enzyme catalyses a 1,2-diacyl-sn-glycerol + UDP-alpha-D-glucose = a 1,2-diacyl-3-O-(beta-D-glucopyranosyl)-sn-glycerol + UDP + H(+). Its function is as follows. Glucosyltransferase involved in the biosynthesis of the non-bilayer-forming membrane lipid beta-monoglucosyldiacylglycerol which contributes to regulate the properties and stability of the membrane. Catalyzes the transfer of a glucosyl residue from UDP-Glc to diacylglycerol (DAG) acceptor to form the corresponding beta-glucosyl-DAG (1,2-diacyl-3-O-(beta-D-glucopyranosyl)-sn-glycerol). It can only use UDP-Glc as sugar donor. Two types of DAG (dipalmitoyl-DAG (DPDAG) and 1-oleoyl-2-palmitoyl-DAG (OPDAG)) can be used as sugar acceptors, but OPDAG is preferred. The chain is Beta-monoglucosyldiacylglycerol synthase from Synechocystis sp. (strain ATCC 27184 / PCC 6803 / Kazusa).